We begin with the raw amino-acid sequence, 547 residues long: Chaperonin GroEL 1 (547 aa).

Residues 30–33 (TLGP), K51, 87–91 (DGTTT), G415, 479–481 (NAA), and D495 each bind ATP.

This sequence belongs to the chaperonin (HSP60) family. Forms a cylinder of 14 subunits composed of two heptameric rings stacked back-to-back. Interacts with the co-chaperonin GroES.

The protein localises to the cytoplasm. It catalyses the reaction ATP + H2O + a folded polypeptide = ADP + phosphate + an unfolded polypeptide.. In terms of biological role, together with its co-chaperonin GroES, plays an essential role in assisting protein folding. The GroEL-GroES system forms a nano-cage that allows encapsulation of the non-native substrate proteins and provides a physical environment optimized to promote and accelerate protein folding. This chain is Chaperonin GroEL 1, found in Vibrio parahaemolyticus serotype O3:K6 (strain RIMD 2210633).